The primary structure comprises 209 residues: Uracil phosphoribosyltransferase (209 aa).

Residues Arg79, Arg104, and 131–139 (DPMLATGGS) contribute to the 5-phospho-alpha-D-ribose 1-diphosphate site. Uracil is bound by residues Ile194 and 199–201 (GDA). Position 200 (Asp200) interacts with 5-phospho-alpha-D-ribose 1-diphosphate.

It belongs to the UPRTase family. Mg(2+) is required as a cofactor.

The catalysed reaction is UMP + diphosphate = 5-phospho-alpha-D-ribose 1-diphosphate + uracil. The protein operates within pyrimidine metabolism; UMP biosynthesis via salvage pathway; UMP from uracil: step 1/1. With respect to regulation, allosterically activated by GTP. Catalyzes the conversion of uracil and 5-phospho-alpha-D-ribose 1-diphosphate (PRPP) to UMP and diphosphate. The sequence is that of Uracil phosphoribosyltransferase from Lacticaseibacillus paracasei (strain ATCC 334 / BCRC 17002 / CCUG 31169 / CIP 107868 / KCTC 3260 / NRRL B-441) (Lactobacillus paracasei).